Reading from the N-terminus, the 520-residue chain is MQTQKPTLELLTCEGAYRDNPTALFHQLCGDRPATLLLESADIDSKDDLKSLLLVDSALRITALGDTVTIQALSGNGEALLALLDNALPAGVESEQSPNCRVLRFPPVSPLLDEDARLCSLSVFDAFRLLQNLLNVPKEEREAMFFGGLFSYDLVAGFEDLPQLSAENNCPDFCFYLAETLMVIDHQKKSTRIQASLFAPNEEEKQRLTARLNELRQQLTEAAPPLPVVSVPHMRCECNQSDEEFGGVVRLLQKAIRAGEIFQVVPSRRFSLPCPSPLAAYYVLKKSNPSPYMFFMQDNDFTLFGASPESSLKYDATSRQIEIYPIAGTRPRGRRADGSLDRDLDSRIELEMRTDHKELSEHLMLVDLARNDLARICTPGSRYVADLTKVDRYSYVMHLVSRVVGELRHDLDALHAYRACMNMGTLSGAPKVRAMQLIAEAEGRRRGSYGGAVGYFTAHGDLDTCIVIRSALVENGIATVQAGAGVVLDSVPQSEADETRNKARAVLRAIATAHHAQETF.

L-tryptophan contacts are provided by residues Ser40 and 291 to 293 (PYM). 328 to 329 (GT) serves as a coordination point for chorismate. Glu361 contributes to the Mg(2+) binding site. Residues Tyr449, Arg469, 483 to 485 (GAG), and Gly485 contribute to the chorismate site. A Mg(2+)-binding site is contributed by Glu498.

The protein belongs to the anthranilate synthase component I family. Heterotetramer consisting of two non-identical subunits: a beta subunit (TrpG) and a large lpha subunit (TrpE). The cofactor is Mg(2+).

It catalyses the reaction chorismate + L-glutamine = anthranilate + pyruvate + L-glutamate + H(+). It functions in the pathway amino-acid biosynthesis; L-tryptophan biosynthesis; L-tryptophan from chorismate: step 1/5. With respect to regulation, cooperatively feedback inhibited by tryptophan. Part of a heterotetrameric complex that catalyzes the two-step biosynthesis of anthranilate, an intermediate in the biosynthesis of L-tryptophan. In the first step, the glutamine-binding beta subunit (TrpG) of anthranilate synthase (AS) provides the glutamine amidotransferase activity which generates ammonia as a substrate that, along with chorismate, is used in the second step, catalyzed by the large alpha subunit of AS (TrpE) to produce anthranilate. In the absence of TrpG, TrpE can synthesize anthranilate directly from chorismate and high concentrations of ammonia. The protein is Anthranilate synthase component 1 (trpE) of Escherichia coli (strain K12).